The primary structure comprises 215 residues: Large ribosomal subunit protein eL14 (215 aa).

Lysine 79 carries the post-translational modification N6-acetyllysine. Lysine 85 carries the N6-acetyllysine; alternate modification. Lysine 85 carries the post-translational modification N6-succinyllysine; alternate. Residue lysine 124 forms a Glycyl lysine isopeptide (Lys-Gly) (interchain with G-Cter in SUMO2) linkage. Serine 139 is modified (phosphoserine). Residues 161–215 are disordered; the sequence is VPAKKITAASKKAPAQKVPAQKATGQKAAPAPKAQKGQKAPAQKAPAPKASGKKA. 6 tandem repeats follow at residues 171-175, 176-180, 181-185, 186-190, 193-195, and 196-198. The segment at 171–190 is 4 X 5 AA tandem repeats of Q-K-A-[PAS]-X; it reads KKAPAQKVPAQKATGQKAAP. Residues 193–198 form a 2 X 3 AA tandem repeats of K-[GA]-Q region; the sequence is KAQKGQ. At lysine 204 the chain carries N6-succinyllysine.

This sequence belongs to the eukaryotic ribosomal protein eL14 family. Component of the large ribosomal subunit.

The protein localises to the cytoplasm. Functionally, component of the large ribosomal subunit. The ribosome is a large ribonucleoprotein complex responsible for the synthesis of proteins in the cell. This Homo sapiens (Human) protein is Large ribosomal subunit protein eL14 (RPL14).